Reading from the N-terminus, the 307-residue chain is Agmatinase (307 aa).

Residues histidine 128, aspartate 151, histidine 153, aspartate 155, aspartate 232, and aspartate 234 each contribute to the Mn(2+) site.

It belongs to the arginase family. Agmatinase subfamily. Requires Mn(2+) as cofactor.

The catalysed reaction is agmatine + H2O = urea + putrescine. The protein operates within amine and polyamine biosynthesis; putrescine biosynthesis via agmatine pathway; putrescine from agmatine: step 1/1. Catalyzes the formation of putrescine from agmatine. This is Agmatinase from Neisseria meningitidis serogroup C (strain 053442).